Consider the following 130-residue polypeptide: Ribosome-binding factor A (130 aa).

Belongs to the RbfA family. As to quaternary structure, monomer. Binds 30S ribosomal subunits, but not 50S ribosomal subunits or 70S ribosomes.

Its subcellular location is the cytoplasm. One of several proteins that assist in the late maturation steps of the functional core of the 30S ribosomal subunit. Associates with free 30S ribosomal subunits (but not with 30S subunits that are part of 70S ribosomes or polysomes). Required for efficient processing of 16S rRNA. May interact with the 5'-terminal helix region of 16S rRNA. The polypeptide is Ribosome-binding factor A (Flavobacterium johnsoniae (strain ATCC 17061 / DSM 2064 / JCM 8514 / BCRC 14874 / CCUG 350202 / NBRC 14942 / NCIMB 11054 / UW101) (Cytophaga johnsonae)).